We begin with the raw amino-acid sequence, 164 residues long: MVNPTVFFDITADGEPLGRVCFELFADKVPKTAENFRALSTGEKGFGYKGSSFHRIIPGFMCQGGDFTRHNGTGGKSIYGEKFEDENFILKHTGPGILSMANAGPNTNGSQFFICTAKTEWLDGKHVVFGKVKEGMSIVEAMERFGSRNGKTSKKITISDCGQL.

M1 carries the post-translational modification N-acetylmethionine. V2 carries the N-acetylvaline; in Peptidyl-prolyl cis-trans isomerase A, N-terminally processed modification. The PPIase cyclophilin-type domain maps to F7–Q163. Residue K28 is modified to N6-acetyllysine; alternate. Residue K28 forms a Glycyl lysine isopeptide (Lys-Gly) (interchain with G-Cter in SUMO2); alternate linkage. Residue K28 forms a Glycyl lysine isopeptide (Lys-Gly) (interchain with G-Cter in ubiquitin); alternate linkage. K44 and K76 each carry N6-acetyllysine. S77 carries the post-translational modification Phosphoserine. K82 is subject to N6-acetyllysine; alternate. K82 participates in a covalent cross-link: Glycyl lysine isopeptide (Lys-Gly) (interchain with G-Cter in SUMO2); alternate. T93 is subject to Phosphothreonine. N108 carries N-linked (GlcNAc...) asparagine glycosylation. Residues K125, K131, and K133 each carry the N6-acetyllysine modification.

The protein belongs to the cyclophilin-type PPIase family. PPIase A subfamily. As to quaternary structure, interacts with protein phosphatase PPP3CA/calcineurin A. Interacts with isoform 2 of BSG/CD147. Interacts with FOXO1; the interaction promotes FOXO1 dephosphorylation, nuclear accumulation and transcriptional activity. Interacts with integrin ITGA2B:ITGB3; the interaction is ROS and peptidyl-prolyl cis-trans isomerase (PPIase) activity-dependent and is increased in the presence of thrombin. Interacts with MAP3K5. Interacts with TARDBP; the interaction is dependent on the RNA-binding activity of TARDBP and the PPIase activity of PPIA/CYPA and the acetylation of PPIA/CYPA at Lys-125 favors the interaction. Interacts with HNRNPA1, HNRNPA2B1, HNRNPC, RBMX, HNRNPK and HNRNPM. In terms of processing, acetylation at Lys-125 markedly inhibits catalysis of cis to trans isomerization. PPIA acetylation also antagonizes the immunosuppressive effects of cyclosporine by inhibiting the sequential steps of cyclosporine binding and calcineurin inhibition. Acetylation at Lys-125 favors the interaction with TARDBP.

It localises to the cytoplasm. It is found in the secreted. The protein resides in the nucleus. The enzyme catalyses [protein]-peptidylproline (omega=180) = [protein]-peptidylproline (omega=0). Binds cyclosporin A (CsA). CsA mediates some of its effects via an inhibitory action on PPIase. Functionally, catalyzes the cis-trans isomerization of proline imidic peptide bonds in oligopeptides. Exerts a strong chemotactic effect on leukocytes partly through activation of one of its membrane receptors BSG/CD147, initiating a signaling cascade that culminates in MAPK/ERK activation. Activates endothelial cells (ECs) in a proinflammatory manner by stimulating activation of NF-kappa-B and ERK, JNK and p38 MAP-kinases and by inducing expression of adhesion molecules including SELE and VCAM1. Induces apoptosis in ECs by promoting the FOXO1-dependent expression of CCL2 and BCL2L11 which are involved in EC chemotaxis and apoptosis. In response to oxidative stress, initiates proapoptotic and antiapoptotic signaling in ECs via activation of NF-kappa-B and AKT1 and up-regulation of antiapoptotic protein BCL2. Negatively regulates MAP3K5/ASK1 kinase activity, autophosphorylation and oxidative stress-induced apoptosis mediated by MAP3K5/ASK1. Necessary for the assembly of TARDBP in heterogeneous nuclear ribonucleoprotein (hnRNP) complexes and regulates TARDBP binding to RNA UG repeats and TARDBP-dependent expression of HDAC6, ATG7 and VCP which are involved in clearance of protein aggregates. Plays an important role in platelet activation and aggregation. Regulates calcium mobilization and integrin ITGA2B:ITGB3 bidirectional signaling via increased ROS production as well as by facilitating the interaction between integrin and the cell cytoskeleton. Binds heparan sulfate glycosaminoglycans. This Rattus norvegicus (Rat) protein is Peptidyl-prolyl cis-trans isomerase A (Ppia).